Reading from the N-terminus, the 267-residue chain is MEDINFASLAPRHGSRPFMGTWNEIGTSQLNGGAFSWSSLWSGIKNFGSSIKSFGNKAWNSNTGQMLRDKLKDQNFQQKVVDGLASGINGVVDIANQALQNQINQRLENSRQPPVALQQRPPPKVEEVEVEEKLPPLEVAPPLPSKGEKRPRPDLEETLVVESREPPSYEQALKEGASPYPMTKPIGSMARPVYGKESKPVTLELPPPVPTVPPMPAPTLGTAVSRPTAPTVAVATPARRPRGANWQSTLNSIVGLGVKSLKRRRCY.

The propeptide occupies 1–33 (MEDINFASLAPRHGSRPFMGTWNEIGTSQLNGG). Residues 34–54 (AFSWSSLWSGIKNFGSSIKSF) are amphipathic alpha-helix essential for membrane lytic activity. Residues 36 to 53 (SWSSLWSGIKNFGSSIKS) are involved in endosomal membrane lysis. Residues 48–74 (GSSIKSFGNKAWNSNTGQMLRDKLKDQ) are interaction with hexon protein. The Nuclear export signal motif lies at 67-76 (LRDKLKDQNF). Disordered regions lie at residues 107–184 (LENS…PMTK) and 199–230 (KPVT…PTAP). Basic and acidic residues-rich tracts occupy residues 123-135 (PKVE…EKLP) and 146-155 (KGEKRPRPDL). The Nuclear localization signal motif lies at 149–153 (KRPRP). A PPXY motif motif is present at residues 166 to 169 (PPSY). Positions 205–217 (LPPPVPTVPPMPA) are enriched in pro residues. The span at 218–230 (PTLGTAVSRPTAP) shows a compositional bias: low complexity. A Nuclear export signal motif is present at residues 248–259 (STLNSIVGLGVK). Residues 250–256 (LNSIVGL) form an interaction with hexon protein region. Positions 257–267 (GVKSLKRRRCY) are binds to importin alpha/beta, involved in hexon nuclear import. A Nuclear localization signal motif is present at residues 262-265 (KRRR).

This sequence belongs to the adenoviridae protein VI family. In terms of assembly, interacts with hexon protein; this interaction allows nuclear import of hexon trimers and possibly pre-capsid assembly. Interacts (via C-terminal NLS) with importin alpha/beta. As to quaternary structure, interacts (via PPxY motif) with host NEDD4 ubiquitine ligase; this interaction might play a role in virus intracellular transport during entry. Part of a complex composed of the core-capsid bridging protein, the endosome lysis protein VI and the hexon-linking protein VIII; these interactions bridge the virus core to the capsid. Interacts with peripentonal hexons; this interaction stabilizes the capsid by gluing two peripentonal hexons together and joining them with an adjacent group-of-nine hexon. Heterodimer with the viral protease; disulfide-linked. Interacts with the viral protease. In terms of processing, ubiquitinated by Nedd4 following partial capsid disassembly; which might play a role in intracellular virus movement during entry. Contains the major nuclear import and export signals. Proteolytically removed during virion maturation. The processing of the C-terminus turns the precursor into a mature viral structural protein and abrogates its ability to promote hexon import and act as a potential chaperone protein.

It is found in the host nucleus. Its subcellular location is the host cytoplasm. It localises to the virion. During virus assembly, promotes hexon trimers nuclear import through nuclear pore complexes via an importin alpha/beta-dependent mechanism. By analogy to herpesviruses capsid assembly, might act as a chaperone to promote the formation of the icosahedral capsid. In terms of biological role, structural component of the virion that provides increased stability to the particle shell through its interaction with the core-capsid bridging protein and the hexon-linking protein VIII. Fibers shedding during virus entry into host cell allows the endosome lysis protein to be exposed as a membrane-lytic peptide. Exhibits pH-independent membrane fragmentation activity and probably mediates viral rapid escape from host endosome via organellar membrane lysis. It is not clear if it then remains partially associated with the capsid and involved in the intracellular microtubule-dependent transport of capsid to the nucleus, or if it is lost during endosomal penetration. Its function is as follows. Cofactor that activates the viral protease. Binds to viral protease in a 1:1 ratio. The protein is Pre-protein VI of Homo sapiens (Human).